The primary structure comprises 353 residues: 3-isopropylmalate dehydrogenase (353 aa).

73–86 (GPQYDTLDRPLRPE) serves as a coordination point for NAD(+). Positions 93, 103, 131, and 220 each coordinate substrate. Mg(2+) is bound by residues D220, D244, and D248. 278–290 (GSAPDIAGKNLAN) contributes to the NAD(+) binding site.

Belongs to the isocitrate and isopropylmalate dehydrogenases family. LeuB type 1 subfamily. Homodimer. Mg(2+) is required as a cofactor. Mn(2+) serves as cofactor.

It localises to the cytoplasm. The catalysed reaction is (2R,3S)-3-isopropylmalate + NAD(+) = 4-methyl-2-oxopentanoate + CO2 + NADH. It functions in the pathway amino-acid biosynthesis; L-leucine biosynthesis; L-leucine from 3-methyl-2-oxobutanoate: step 3/4. Catalyzes the oxidation of 3-carboxy-2-hydroxy-4-methylpentanoate (3-isopropylmalate) to 3-carboxy-4-methyl-2-oxopentanoate. The product decarboxylates to 4-methyl-2 oxopentanoate. The sequence is that of 3-isopropylmalate dehydrogenase from Thiobacillus denitrificans (strain ATCC 25259 / T1).